Reading from the N-terminus, the 312-residue chain is Taste receptor type 2 member 62 (312 aa).

Over Met1 to Leu4 the chain is Extracellular. Residues Pro5 to Leu27 form a helical membrane-spanning segment. The Cytoplasmic portion of the chain corresponds to Val28–Arg39. A helical membrane pass occupies residues Met40–Ala62. The Extracellular segment spans residues Met63–Asn81. A helical membrane pass occupies residues Ile82 to Val104. Residues Lys105–Lys127 are Cytoplasmic-facing. Residues Leu128 to Phe150 form a helical membrane-spanning segment. Topologically, residues Gly151–Gly182 are extracellular. Asn162 is a glycosylation site (N-linked (GlcNAc...) asparagine). The helical transmembrane segment at Phe183–Trp205 threads the bilayer. Topologically, residues Gln206 to Ser231 are cytoplasmic. The chain crosses the membrane as a helical span at residues Leu232 to Ile254. The Extracellular segment spans residues Asn255–Asn258. A helical membrane pass occupies residues His259–Leu281. Residues Arg282 to Pro312 are Cytoplasmic-facing.

It belongs to the G-protein coupled receptor T2R family.

The protein resides in the membrane. Functionally, receptor that may play a role in the perception of bitterness and is gustducin-linked. May play a role in sensing the chemical composition of the gastrointestinal content. The activity of this receptor may stimulate alpha gustducin, mediate PLC-beta-2 activation and lead to the gating of TRPM5. This Pan paniscus (Pygmy chimpanzee) protein is Taste receptor type 2 member 62 (TAS2R62).